The following is a 228-amino-acid chain: Fibrillarin-like rRNA/tRNA 2'-O-methyltransferase (228 aa).

S-adenosyl-L-methionine-binding positions include 85 to 86 (TT), 103 to 104 (EF), 128 to 129 (DA), and 148 to 151 (DVAQ).

The protein belongs to the methyltransferase superfamily. Fibrillarin family. In terms of assembly, interacts with nop5. Component of box C/D small ribonucleoprotein (sRNP) particles that contain rpl7ae, FlpA and nop5, plus a guide RNA.

Functionally, involved in pre-rRNA and tRNA processing. Utilizes the methyl donor S-adenosyl-L-methionine to catalyze the site-specific 2'-hydroxyl methylation of ribose moieties in rRNA and tRNA. Site specificity is provided by a guide RNA that base pairs with the substrate. Methylation occurs at a characteristic distance from the sequence involved in base pairing with the guide RNA. The sequence is that of Fibrillarin-like rRNA/tRNA 2'-O-methyltransferase from Methanococcus voltae.